A 111-amino-acid polypeptide reads, in one-letter code: uncharacterized protein (111 aa).

Transmembrane regions (helical) follow at residues 27–47 (IIVL…GYKF) and 80–100 (IFTG…ISAI).

It is found in the membrane. This is an uncharacterized protein from Acanthamoeba polyphaga (Amoeba).